The sequence spans 237 residues: Urease accessory protein UreF (237 aa).

It belongs to the UreF family. As to quaternary structure, ureD, UreF and UreG form a complex that acts as a GTP-hydrolysis-dependent molecular chaperone, activating the urease apoprotein by helping to assemble the nickel containing metallocenter of UreC. The UreE protein probably delivers the nickel.

The protein localises to the cytoplasm. Its function is as follows. Required for maturation of urease via the functional incorporation of the urease nickel metallocenter. This is Urease accessory protein UreF from Methylibium petroleiphilum (strain ATCC BAA-1232 / LMG 22953 / PM1).